Reading from the N-terminus, the 98-residue chain is NADH-ubiquinone oxidoreductase chain 4L (98 aa).

A run of 3 helical transmembrane segments spans residues 1 to 21, 29 to 49, and 61 to 81; these read MTMVYANIFLAFIMSLMGLLM, SLLCLEGMMLSLFVMMTVTIL, and IILLVFAACEAALGLSLLVMV.

This sequence belongs to the complex I subunit 4L family. As to quaternary structure, core subunit of respiratory chain NADH dehydrogenase (Complex I) which is composed of 45 different subunits.

The protein localises to the mitochondrion inner membrane. It carries out the reaction a ubiquinone + NADH + 5 H(+)(in) = a ubiquinol + NAD(+) + 4 H(+)(out). In terms of biological role, core subunit of the mitochondrial membrane respiratory chain NADH dehydrogenase (Complex I) which catalyzes electron transfer from NADH through the respiratory chain, using ubiquinone as an electron acceptor. Part of the enzyme membrane arm which is embedded in the lipid bilayer and involved in proton translocation. In Mirounga angustirostris (Northern elephant seal), this protein is NADH-ubiquinone oxidoreductase chain 4L (MT-ND4L).